A 249-amino-acid polypeptide reads, in one-letter code: 1-(5-phosphoribosyl)-5-[(5-phosphoribosylamino)methylideneamino] imidazole-4-carboxamide isomerase (249 aa).

Aspartate 8 (proton acceptor) is an active-site residue. Aspartate 131 (proton donor) is an active-site residue.

Belongs to the HisA/HisF family.

It is found in the cytoplasm. It carries out the reaction 1-(5-phospho-beta-D-ribosyl)-5-[(5-phospho-beta-D-ribosylamino)methylideneamino]imidazole-4-carboxamide = 5-[(5-phospho-1-deoxy-D-ribulos-1-ylimino)methylamino]-1-(5-phospho-beta-D-ribosyl)imidazole-4-carboxamide. It participates in amino-acid biosynthesis; L-histidine biosynthesis; L-histidine from 5-phospho-alpha-D-ribose 1-diphosphate: step 4/9. In Nitrosomonas europaea (strain ATCC 19718 / CIP 103999 / KCTC 2705 / NBRC 14298), this protein is 1-(5-phosphoribosyl)-5-[(5-phosphoribosylamino)methylideneamino] imidazole-4-carboxamide isomerase.